Consider the following 388-residue polypeptide: Succinate--CoA ligase [ADP-forming] subunit beta (388 aa).

The ATP-grasp domain occupies 9–244 (KQLFAEYGLP…PSQDDPREAH (236 aa)). ATP-binding positions include lysine 46, 53–55 (GRG), glutamate 99, threonine 102, and glutamate 107. Positions 199 and 213 each coordinate Mg(2+). Substrate-binding positions include asparagine 264 and 321-323 (GIV).

Belongs to the succinate/malate CoA ligase beta subunit family. Heterotetramer of two alpha and two beta subunits. Mg(2+) is required as a cofactor.

The catalysed reaction is succinate + ATP + CoA = succinyl-CoA + ADP + phosphate. It catalyses the reaction GTP + succinate + CoA = succinyl-CoA + GDP + phosphate. It participates in carbohydrate metabolism; tricarboxylic acid cycle; succinate from succinyl-CoA (ligase route): step 1/1. Succinyl-CoA synthetase functions in the citric acid cycle (TCA), coupling the hydrolysis of succinyl-CoA to the synthesis of either ATP or GTP and thus represents the only step of substrate-level phosphorylation in the TCA. The beta subunit provides nucleotide specificity of the enzyme and binds the substrate succinate, while the binding sites for coenzyme A and phosphate are found in the alpha subunit. In Pseudomonas fluorescens (strain SBW25), this protein is Succinate--CoA ligase [ADP-forming] subunit beta.